Reading from the N-terminus, the 511-residue chain is Maturase K (511 aa).

Belongs to the intron maturase 2 family. MatK subfamily.

It localises to the plastid. Its subcellular location is the chloroplast. Usually encoded in the trnK tRNA gene intron. Probably assists in splicing its own and other chloroplast group II introns. This chain is Maturase K, found in Pistia stratiotes (Water lettuce).